A 399-amino-acid chain; its full sequence is Acetate kinase (399 aa).

Asparagine 7 contacts Mg(2+). Lysine 14 is an ATP binding site. Residue arginine 91 participates in substrate binding. Residue aspartate 148 is the Proton donor/acceptor of the active site. Residues 208-212 and 283-285 contribute to the ATP site; these read HLGNG and DFR. Mg(2+) is bound at residue glutamate 384.

The protein belongs to the acetokinase family. Homodimer. Requires Mg(2+) as cofactor. It depends on Mn(2+) as a cofactor.

The protein resides in the cytoplasm. It carries out the reaction acetate + ATP = acetyl phosphate + ADP. It participates in metabolic intermediate biosynthesis; acetyl-CoA biosynthesis; acetyl-CoA from acetate: step 1/2. Functionally, catalyzes the formation of acetyl phosphate from acetate and ATP. Can also catalyze the reverse reaction. In Dictyoglomus thermophilum (strain ATCC 35947 / DSM 3960 / H-6-12), this protein is Acetate kinase.